The sequence spans 330 residues: Aspartate--ammonia ligase (330 aa).

The protein belongs to the class-II aminoacyl-tRNA synthetase family. AsnA subfamily.

It is found in the cytoplasm. The enzyme catalyses L-aspartate + NH4(+) + ATP = L-asparagine + AMP + diphosphate + H(+). It functions in the pathway amino-acid biosynthesis; L-asparagine biosynthesis; L-asparagine from L-aspartate (ammonia route): step 1/1. In Escherichia coli O127:H6 (strain E2348/69 / EPEC), this protein is Aspartate--ammonia ligase.